Consider the following 472-residue polypeptide: N(6)-adenine-specific methyltransferase METTL4 (472 aa).

It belongs to the MT-A70-like family.

It localises to the nucleus. The protein localises to the cytoplasm. Its subcellular location is the cytosol. The protein resides in the mitochondrion matrix. The enzyme catalyses a 2'-O-methyladenosine in U2 snRNA + S-adenosyl-L-methionine = an N(6)-methyl-2'-O-methyladenosine in U2 snRNA + S-adenosyl-L-homocysteine + H(+). The catalysed reaction is a 2'-deoxyadenosine in DNA + S-adenosyl-L-methionine = an N(6)-methyl-2'-deoxyadenosine in DNA + S-adenosyl-L-homocysteine + H(+). Functionally, n(6)-adenine-specific methyltransferase that can methylate both RNAs and DNA. Acts as a N(6)-adenine-specific RNA methyltransferase by catalyzing formation of N6,2'-O-dimethyladenosine (m6A(m)) on internal positions of U2 small nuclear RNA (snRNA): methylates the 6th position of adenine residues with a pre-deposited 2'-O-methylation. Internal m6A(m) methylation of snRNAs regulates RNA splicing. Also able to act as a N(6)-adenine-specific DNA methyltransferase by mediating methylation of DNA on the 6th position of adenine (N(6)-methyladenosine). The existence of N(6)-methyladenosine (m6A) on DNA is however unclear in mammals, and additional evidences are required to confirm the role of the N(6)-adenine-specific DNA methyltransferase activity of METTL4 in vivo. Acts as a regulator of mitochondrial transcript levels and mitochondrial DNA (mtDNA) copy number by mediating mtDNA N(6)-methylation: m6A on mtDNA reduces transcription by repressing TFAM DNA-binding and bending. N(6)-methyladenosine deposition by METTL4 regulates Polycomb silencing by triggering ubiquitination and degradation of sensor proteins ASXL1 and MPND, leading to inactivation of the PR-DUB complex and subsequent preservation of Polycomb silencing. The chain is N(6)-adenine-specific methyltransferase METTL4 from Homo sapiens (Human).